The primary structure comprises 204 residues: Tat proofreading chaperone DmsD (204 aa).

This sequence belongs to the TorD/DmsD family. DmsD subfamily.

Its function is as follows. Required for biogenesis/assembly of DMSO reductase, but not for the interaction of the DmsA signal peptide with the Tat system. May be part of a chaperone cascade complex that facilitates a folding-maturation pathway for the substrate protein. This chain is Tat proofreading chaperone DmsD, found in Salmonella paratyphi A (strain ATCC 9150 / SARB42).